The primary structure comprises 359 residues: 3-dehydroquinate synthase (359 aa).

NAD(+) is bound by residues 71–76, 105–109, 129–130, Lys-142, Lys-151, and 169–172; these read DGEQYK, GVIGD, TT, and CLST. Positions 184, 247, and 264 each coordinate Zn(2+).

This sequence belongs to the sugar phosphate cyclases superfamily. Dehydroquinate synthase family. It depends on Co(2+) as a cofactor. Zn(2+) is required as a cofactor. The cofactor is NAD(+).

It is found in the cytoplasm. It catalyses the reaction 7-phospho-2-dehydro-3-deoxy-D-arabino-heptonate = 3-dehydroquinate + phosphate. Its pathway is metabolic intermediate biosynthesis; chorismate biosynthesis; chorismate from D-erythrose 4-phosphate and phosphoenolpyruvate: step 2/7. Functionally, catalyzes the conversion of 3-deoxy-D-arabino-heptulosonate 7-phosphate (DAHP) to dehydroquinate (DHQ). In Shewanella pealeana (strain ATCC 700345 / ANG-SQ1), this protein is 3-dehydroquinate synthase.